The chain runs to 622 residues: Protein FAM234B (622 aa).

A disordered region spans residues 1-68 (MATVLSRALK…EPDSDAEVAE (68 aa)). Phosphoserine is present on Ser-16. Thr-26 bears the Phosphothreonine mark. 3 positions are modified to phosphoserine: Ser-30, Ser-33, and Ser-62. A helical membrane pass occupies residues 104–124 (TSVFLLTLGISMILVLLCAFL).

This sequence belongs to the FAM234 family.

It localises to the membrane. The protein localises to the golgi outpost. Its subcellular location is the cytoplasm. It is found in the cytoskeleton. The protein resides in the microtubule organizing center. This Homo sapiens (Human) protein is Protein FAM234B.